Reading from the N-terminus, the 721-residue chain is Zinc-transporting ATPase (721 aa).

Over 1 to 107 (MTQSSPLKTQ…HSHGAGEFNL (107 aa)) the chain is Cytoplasmic. An HMA domain is found at 8–74 (KTQQMQVGGM…RIAALGYTLA (67 aa)). Zn(2+) contacts are provided by cysteine 19 and cysteine 22. Residues 80–101 (VTLNGHKHPHSHREEGHSHSHG) form a disordered region. The helical transmembrane segment at 108–128 (KQELLPVLTAIALFTIAILFE) threads the bilayer. Residues 129 to 140 (QPLHNTPGQIAE) are Extracellular-facing. The chain crosses the membrane as a helical span at residues 141–160 (FAVIIPAYLLSGWTVLKTAG). The Cytoplasmic portion of the chain corresponds to 161–167 (RNILRGQ). The helical transmembrane segment at 168–187 (IFDENFLMTIATLGALAIHQ) threads the bilayer. Residues 188–190 (LPE) are Extracellular-facing. Residues 191–210 (AVAVMLFFRVGELFQEYSVG) traverse the membrane as a helical segment. At 211–344 (RSRRSIKALL…ITQFARYYTP (134 aa)) the chain is on the cytoplasmic side. Residues 345–363 (VIVFLSLAVALLPPLFIPG) traverse the membrane as a helical segment. The Extracellular portion of the chain corresponds to 364-369 (ADRADW). A helical transmembrane segment spans residues 370–387 (VYRALVLLVISCPCGLVI). Residues 388–671 (SIPLGYFGGI…AIHVARKTRQ (284 aa)) are Cytoplasmic-facing. Aspartate 425 serves as the catalytic 4-aspartylphosphate intermediate. Mg(2+)-binding residues include aspartate 618 and aspartate 622. A helical transmembrane segment spans residues 672-693 (IVVQNIVLALGIKALFIALGTI). Over 694–701 (GLATLWEA) the chain is Extracellular. Residues 702–717 (VFADVGVALLAILNAT) form a helical membrane-spanning segment. The Cytoplasmic portion of the chain corresponds to 718 to 721 (RIAK).

It belongs to the cation transport ATPase (P-type) (TC 3.A.3) family. Type IB subfamily.

The protein localises to the cell membrane. It catalyses the reaction Zn(2+)(in) + ATP + H2O = Zn(2+)(out) + ADP + phosphate + H(+). This is Zinc-transporting ATPase (ziaA) from Synechocystis sp. (strain ATCC 27184 / PCC 6803 / Kazusa).